The following is a 112-amino-acid chain: Large ribosomal subunit protein uL22 (112 aa).

Belongs to the universal ribosomal protein uL22 family. In terms of assembly, part of the 50S ribosomal subunit.

Its function is as follows. This protein binds specifically to 23S rRNA; its binding is stimulated by other ribosomal proteins, e.g. L4, L17, and L20. It is important during the early stages of 50S assembly. It makes multiple contacts with different domains of the 23S rRNA in the assembled 50S subunit and ribosome. In terms of biological role, the globular domain of the protein is located near the polypeptide exit tunnel on the outside of the subunit, while an extended beta-hairpin is found that lines the wall of the exit tunnel in the center of the 70S ribosome. The sequence is that of Large ribosomal subunit protein uL22 from Mesoplasma florum (strain ATCC 33453 / NBRC 100688 / NCTC 11704 / L1) (Acholeplasma florum).